The sequence spans 558 residues: Hepatocyte nuclear factor 1-beta (558 aa).

The segment at 1 to 31 (MVSKLTSLQQELLSALLSSGVTKEVLIQALE) is dimerization. The 32-residue stretch at 1 to 32 (MVSKLTSLQQELLSALLSSGVTKEVLIQALEE) folds into the HNF-p1 domain. A phosphoserine mark is found at S49, S52, S75, and S80. The segment at 66 to 85 (TNGHAKGRLSGDEGSEDGDD) is disordered. Positions 93–188 (KELQALNTEE…ILRQFNQTVQ (96 aa)) constitute a POU-specific atypical domain. Residues 231-311 (MRRNRFKWGP…NRRKEEAFRQ (81 aa)) constitute a DNA-binding region (homeobox; HNF1-type). The disordered stretch occupies residues 323–348 (THNLNPLLTHGSPHHQPSSSPPNKMS).

This sequence belongs to the HNF1 homeobox family. Binds DNA as a dimer. Can form homodimer or heterodimer with HNF1-alpha. Interacts (via HNF-p1 domain) with PCBD1; the interaction increases its transactivation activity.

The protein resides in the nucleus. Its function is as follows. Transcription factor that binds to the inverted palindrome 5'-GTTAATNATTAAC-3'. Binds to the FPC element in the cAMP regulatory unit of the PLAU gene. Transcriptional activity is increased by coactivator PCBD1. In Mus musculus (Mouse), this protein is Hepatocyte nuclear factor 1-beta (Hnf1b).